The following is a 350-amino-acid chain: Dihydroorotate dehydrogenase (quinone) (350 aa).

FMN-binding positions include 67–71 and G91; that span reads AGFDK. K71 is a binding site for substrate. Residue 116–120 participates in substrate binding; sequence NRMGL. FMN-binding residues include N144 and N177. Substrate is bound at residue N177. The Nucleophile role is filled by C180. N182 contacts substrate. K213 and T241 together coordinate FMN. Position 242–243 (242–243) interacts with substrate; it reads NT. Residues 245–265 are disordered; it reads TERPASLRSPNAVETGGLSGK. FMN is bound by residues G264, G291, and 312–313; that span reads YT.

It belongs to the dihydroorotate dehydrogenase family. Type 2 subfamily. Monomer. Requires FMN as cofactor.

It is found in the cell membrane. It catalyses the reaction (S)-dihydroorotate + a quinone = orotate + a quinol. It participates in pyrimidine metabolism; UMP biosynthesis via de novo pathway; orotate from (S)-dihydroorotate (quinone route): step 1/1. Catalyzes the conversion of dihydroorotate to orotate with quinone as electron acceptor. The polypeptide is Dihydroorotate dehydrogenase (quinone) (pyrD) (Haloarcula marismortui (strain ATCC 43049 / DSM 3752 / JCM 8966 / VKM B-1809) (Halobacterium marismortui)).